Consider the following 716-residue polypeptide: 1,4-alpha-glucan branching enzyme GlgB (716 aa).

Catalysis depends on Asp-398, which acts as the Nucleophile. Glu-451 (proton donor) is an active-site residue.

The protein belongs to the glycosyl hydrolase 13 family. GlgB subfamily. Monomer.

It catalyses the reaction Transfers a segment of a (1-&gt;4)-alpha-D-glucan chain to a primary hydroxy group in a similar glucan chain.. Its pathway is glycan biosynthesis; glycogen biosynthesis. In terms of biological role, catalyzes the formation of the alpha-1,6-glucosidic linkages in glycogen by scission of a 1,4-alpha-linked oligosaccharide from growing alpha-1,4-glucan chains and the subsequent attachment of the oligosaccharide to the alpha-1,6 position. The polypeptide is 1,4-alpha-glucan branching enzyme GlgB (Nitrobacter hamburgensis (strain DSM 10229 / NCIMB 13809 / X14)).